A 320-amino-acid polypeptide reads, in one-letter code: Mitochondrial fission regulator 1-like-B (320 aa).

The segment at 1–37 (MASLGAAAEPERSLFGKDGAEACESPEGRRSGRRKRT) is disordered. The span at 9-30 (EPERSLFGKDGAEACESPEGRR) shows a compositional bias: basic and acidic residues.

Belongs to the MTFR1 family.

The protein localises to the mitochondrion outer membrane. Functionally, mitochondrial protein required for adaptation of miochondrial dynamics to metabolic changes. Regulates mitochondrial morphology at steady state and mediates AMPK-dependent stress-induced mitochondrial fragmentation via the control of OPA1 levels. In Xenopus laevis (African clawed frog), this protein is Mitochondrial fission regulator 1-like-B (mtfr1l-b).